The sequence spans 551 residues: MALNIADLAEHAIDAVPDRVALISGGDQLTYGQLEEKANRFAHYLIDQGVKKDDKVGLYCRNRIEIVIAMLGIVKAGAILVNVNFRYVEGELKYLFENSDMVALVHERRYSDRVANVLPETPDIKTILVVEDGSDDDYERFGGVEFYSALEKSSPERDFGPRSEDDIYLLYTGGTTGFPKGVMWRHEDIYRVLFGGTDFATGEPIEDEYGLAKQAAANPPMVRYPIPPMIHGATQSATWMALFAGGTVLLTPEFNPDEVWQAIHDHKVNLLFFTGDAMARPLLDSLLAAKDAGKEYDLSSLFLLASTAALFSTSLKEKFLELLPNRVITDSIGSSETGFGGTSIVAKGQSHTGGPRVTIDKNTVVLDDDGNEVKPGSGVRGVIAKRGHIPLGYYKDEKKTAETFKTINGVRYAIPGDYAEVEADGSVTMLGRGSVSINSGGEKIYPEEVEAALKGHPDVFDALVVGVPDPRFGQHVAAVVHPREGTRPTLAELDAHVRTEIAGYKVPRSLWLVDEIKRSPAGKPDYRWAKDVTEERPADEVHANHVAANAK.

ATP-binding positions include 172-180 (TGGTTGFPK), D417, R432, and K523.

Belongs to the ATP-dependent AMP-binding enzyme family.

The catalysed reaction is a medium-chain fatty acid + ATP + CoA = a medium-chain fatty acyl-CoA + AMP + diphosphate. It carries out the reaction a long-chain fatty acid + ATP + CoA = a long-chain fatty acyl-CoA + AMP + diphosphate. The enzyme catalyses (25S)-3-oxocholest-4-en-26-oate + ATP + CoA = (25S)-3-oxocholest-4-en-26-oyl-CoA + AMP + diphosphate. It functions in the pathway lipid metabolism; fatty acid biosynthesis. It participates in steroid metabolism; cholesterol metabolism. Functionally, plays an essential role in degradation of the side chains of C-24 branched-chain sterols. Not essential for degradation of straight chain sterols such as cholesterol. Catalyzes the activation of medium/long-chain fatty acids as acyl-coenzyme A (acyl-CoA), which are then transferred to the multifunctional polyketide synthase (PKS) type III for further chain extension. May be involved in the degradation of cholesterol via the degradation of the side chains of C-24 branched-chain sterols. The sequence is that of Medium/long-chain-fatty-acid--CoA/3-oxocholest-4-en-26-oate--CoA ligase from Mycolicibacterium smegmatis (strain ATCC 700084 / mc(2)155) (Mycobacterium smegmatis).